The sequence spans 641 residues: FAD-binding monooxygenase ausB (641 aa).

A disordered region spans residues 1–68 (MAIGPKPESI…DSTTNVPYSL (68 aa)). A compositionally biased stretch (polar residues) spans 49-68 (WLTSTDQPQPDSTTNVPYSL). FAD contacts are provided by residues 115–118 (TWYW), 127–128 (DI), and Tyr133. Residue 125–127 (MCD) participates in NADP(+) binding. NADP(+)-binding positions include 272-278 (TGSTAVQ) and 295-296 (RT).

The protein belongs to the FAD-binding monooxygenase family. The cofactor is FAD.

The enzyme catalyses protoaustinoid A + AH2 + O2 = berkeleyone A + A + H2O. It participates in secondary metabolite biosynthesis; terpenoid biosynthesis. Functionally, FAD-binding monooxygenase; part of the gene cluster A that mediates the biosynthesis of the fungal meroterpenoid acetoxydehydroaustin. The first step of the pathway is the synthesis of 3,5-dimethylorsellinic acid by the polyketide synthase ausA. 3,5-dimethylorsellinic acid is then prenylated by the polyprenyl transferase ausN. Further epoxidation by the FAD-dependent monooxygenase ausM and cyclization by the probable terpene cyclase ausL lead to the formation of protoaustinoid A. Protoaustinoid A is then oxidized to spiro-lactone preaustinoid A3 by the combined action of the FAD-binding monooxygenases ausB and ausC, and the dioxygenase ausE. Acid-catalyzed keto-rearrangement and ring contraction of the tetraketide portion of preaustinoid A3 by ausJ lead to the formation of preaustinoid A4. The aldo-keto reductase ausK, with the help of ausH, is involved in the next step by transforming preaustinoid A4 into isoaustinone which is in turn hydroxylated by the P450 monooxygenase ausI to form austinolide. The cytochrome P450 monooxygenase ausG then modifies austinolide to austinol. Austinol is further acetylated to austin by the O-acetyltransferase ausP, which spontaneously changes to dehydroaustin. The cytochrome P450 monooxygenase then converts dehydroaustin is into 7-dehydrodehydroaustin. The hydroxylation catalyzed by ausR permits the second O-acetyltransferase ausQ to add an additional acetyl group to the molecule, leading to the formation of acetoxydehydroaustin. Due to genetic rearrangements of the clusters and the subsequent loss of some enzymes, the end product of the Penicillium brasilianum austinoid biosynthesis clusters is acetoxydehydroaustin. This Penicillium brasilianum protein is FAD-binding monooxygenase ausB.